The primary structure comprises 1407 residues: DNA-directed RNA polymerase subunit beta' (1407 aa).

The Zn(2+) site is built by cysteine 70, cysteine 72, cysteine 85, and cysteine 88. Aspartate 460, aspartate 462, and aspartate 464 together coordinate Mg(2+). Zn(2+)-binding residues include cysteine 814, cysteine 888, cysteine 895, and cysteine 898. Lysine 972 carries the post-translational modification N6-acetyllysine.

Belongs to the RNA polymerase beta' chain family. The RNAP catalytic core consists of 2 alpha, 1 beta, 1 beta' and 1 omega subunit. When a sigma factor is associated with the core the holoenzyme is formed, which can initiate transcription. It depends on Mg(2+) as a cofactor. Requires Zn(2+) as cofactor.

It catalyses the reaction RNA(n) + a ribonucleoside 5'-triphosphate = RNA(n+1) + diphosphate. Functionally, DNA-dependent RNA polymerase catalyzes the transcription of DNA into RNA using the four ribonucleoside triphosphates as substrates. The polypeptide is DNA-directed RNA polymerase subunit beta' (Shigella flexneri serotype 5b (strain 8401)).